The sequence spans 147 residues: Lysozyme C (147 aa).

An N-terminal signal peptide occupies residues 1 to 18; sequence MKFFLILGFCLLPLIAQG. The C-type lysozyme domain maps to 19-147; that stretch reads KVFQRCELAA…VSQWIRGCRV (129 aa). Intrachain disulfides connect cysteine 24-cysteine 145, cysteine 48-cysteine 133, cysteine 82-cysteine 98, and cysteine 94-cysteine 112. Active-site residues include glutamate 53 and aspartate 70. Aspartate 119 is a substrate binding site.

Belongs to the glycosyl hydrolase 22 family. Monomer. Expressed in liver and ovary. Not expressed in bone marrow, lung, spleen, intestine or oviduct.

The protein resides in the secreted. The enzyme catalyses Hydrolysis of (1-&gt;4)-beta-linkages between N-acetylmuramic acid and N-acetyl-D-glucosamine residues in a peptidoglycan and between N-acetyl-D-glucosamine residues in chitodextrins.. Its function is as follows. Lysozymes have primarily a bacteriolytic function; those in tissues and body fluids are associated with the monocyte-macrophage system and enhance the activity of immunoagents. Has bacteriolytic activity against M.luteus. This Dromaius novaehollandiae (Emu) protein is Lysozyme C.